Consider the following 143-residue polypeptide: HTH-type transcriptional regulator MntR (143 aa).

Positions methionine 1–threonine 63 constitute an HTH dtxR-type domain. The Mn(2+) site is built by aspartate 8, glutamate 11, histidine 77, glutamate 99, glutamate 102, and histidine 103.

The protein belongs to the DtxR/MntR family. Homodimer.

The protein resides in the cytoplasm. With respect to regulation, DNA binding is strongly activated by Mn(2+). In terms of biological role, central regulator of manganese homeostasis. The polypeptide is HTH-type transcriptional regulator MntR (Shouchella clausii (strain KSM-K16) (Alkalihalobacillus clausii)).